The primary structure comprises 836 residues: RNA-binding protein 12B-A (836 aa).

The RRM 1 domain occupies 154–229 (PYLFLRGLPY…RFIEVMQGSE (76 aa)). The tract at residues 237–277 (GTATEGGDTPRMRSEEHSPSRRINGRHFRKRSHSKSPRARS) is disordered. Basic and acidic residues predominate over residues 244–255 (DTPRMRSEEHSP). The segment covering 259 to 277 (INGRHFRKRSHSKSPRARS) has biased composition (basic residues). 2 RRM domains span residues 283–359 (FYVH…PVSR) and 401–478 (LCIY…LISE). Disordered stretches follow at residues 539-572 (GHFKHPQGYFRQSDRRSPEDFRHSPEDYRHPWEE) and 620-644 (SQEHFRRSYQEHIRQPPEEHFRRSR). Residues 550–572 (QSDRRSPEDFRHSPEDYRHPWEE) are compositionally biased toward basic and acidic residues. Serine 703 bears the Phosphoserine mark. N6-acetyllysine is present on lysine 758. Positions 760–836 (IPVKISNLPF…GPRKVKLSLL (77 aa)) constitute an RRM 4 domain.

The protein is RNA-binding protein 12B-A (Rbm12b1) of Mus musculus (Mouse).